Reading from the N-terminus, the 374-residue chain is Alcohol dehydrogenase 1 (374 aa).

S1 is modified (N-acetylserine). The Zn(2+) site is built by C46, H67, C97, C100, C103, C111, and C174. NAD(+) contacts are provided by residues 199–204 (GLGGVG), D223, K228, 292–294 (VGV), and R369.

The protein belongs to the zinc-containing alcohol dehydrogenase family. Class-I subfamily. The cofactor is Zn(2+).

The protein localises to the cytoplasm. The catalysed reaction is a primary alcohol + NAD(+) = an aldehyde + NADH + H(+). The enzyme catalyses a secondary alcohol + NAD(+) = a ketone + NADH + H(+). This Alligator mississippiensis (American alligator) protein is Alcohol dehydrogenase 1.